Here is a 347-residue protein sequence, read N- to C-terminus: Protease HtpX homolog (347 aa).

A run of 4 helical transmembrane segments spans residues 8 to 28 (VALGLYIVGYIFMLIIAATIA), 44 to 64 (AMALTAVLVVLTTAFIIYLFV), 76 to 96 (LSFLLGLIFFVVLMNIITYFA), and 141 to 163 (AFAYGNFLTGRYVAVTSSMLALT). Residue histidine 174 participates in Zn(2+) binding. Glutamate 175 is a catalytic residue. Histidine 178 contributes to the Zn(2+) binding site. The next 2 helical transmembrane spans lie at 185–205 (AIMLLFGILPSIVYYLGVTAV) and 221–241 (ILAAVGIAAVIVSFLIQLLVL). Glutamate 248 serves as a coordination point for Zn(2+).

It belongs to the peptidase M48B family. It depends on Zn(2+) as a cofactor.

Its subcellular location is the cell membrane. The sequence is that of Protease HtpX homolog from Pyrobaculum aerophilum (strain ATCC 51768 / DSM 7523 / JCM 9630 / CIP 104966 / NBRC 100827 / IM2).